Reading from the N-terminus, the 213-residue chain is Phosphoribosyl-dephospho-CoA transferase (213 aa).

Active-site residues include D135 and D137.

It belongs to the MdcG family.

It carries out the reaction apo-[malonate decarboxylase ACP] + 2'-(5''-triphospho-alpha-D-ribosyl)-3'-dephospho-CoA = holo-[malonate decarboxylase ACP] + diphosphate. Its function is as follows. Transfers 2'-(5-triphosphoribosyl)-3'-dephosphocoenzyme-A to the apo-[acyl-carrier-protein] of the malonate decarboxylase to yield holo-[acyl-carrier-protein]. The polypeptide is Phosphoribosyl-dephospho-CoA transferase (Xanthomonas campestris pv. campestris (strain ATCC 33913 / DSM 3586 / NCPPB 528 / LMG 568 / P 25)).